An 83-amino-acid polypeptide reads, in one-letter code: Small ribosomal subunit protein eS21 (83 aa).

This sequence belongs to the eukaryotic ribosomal protein eS21 family. As to quaternary structure, component of the 40S small ribosomal subunit. Interacts with sta.

The protein localises to the cytoplasm. It localises to the cytosol. The protein resides in the rough endoplasmic reticulum. The protein is Small ribosomal subunit protein eS21 (RpS21) of Ceratitis capitata (Mediterranean fruit fly).